The chain runs to 515 residues: MRKINIFDTTLRDGEQSAGINLNLQEKLEIARQLERLGVDIIEAGFPASSKGDFQAVKQIAETIKTCSVTGLARSVQSDIDAAWEALKGGAEPRLHLFIATSPIHMKYKLQMTPEQVIETAVESVKYAKRYFPIVQWSAEDACRSELPFLAKIITEVIKAGATVINIPDTVGYITPKEYGNIFTFLSNNVPNIEKVSLSAHCHDDLGMAVANSLAAIEHGATQIEGTINGIGERAGNAALEEIAVALYIRKDYYQAETRLNLQEIKRTSNLVSKLTGVVIPPNKAVIGKNAFAHESGIHQDGVLKEKTTYEIISPELVGVQSNSMVLGKHSGRHALRNRVEELGYTLSDEEVNKLFVRFKELADKKKDITDDDLVALIFEEKFDHFKDFYQLSSLQVQYGTNQIPTAVVVLKDGQGNEIQEAATGAGSVEALYNTLERCFKTSVTLLDYRIESVSGGRDALAQVFVKVRVNDIETSGRGTAQDVLEASAKAYINAVNRVFMIETMRAENQKVAMQ.

Residues 4-266 (INIFDTTLRD…ETRLNLQEIK (263 aa)) form the Pyruvate carboxyltransferase domain. The Mn(2+) site is built by Asp13, His201, His203, and Asn237. A regulatory domain region spans residues 391–515 (QLSSLQVQYG…RAENQKVAMQ (125 aa)).

This sequence belongs to the alpha-IPM synthase/homocitrate synthase family. LeuA type 1 subfamily. As to quaternary structure, homodimer. It depends on Mn(2+) as a cofactor.

It localises to the cytoplasm. It carries out the reaction 3-methyl-2-oxobutanoate + acetyl-CoA + H2O = (2S)-2-isopropylmalate + CoA + H(+). The protein operates within amino-acid biosynthesis; L-leucine biosynthesis; L-leucine from 3-methyl-2-oxobutanoate: step 1/4. Catalyzes the condensation of the acetyl group of acetyl-CoA with 3-methyl-2-oxobutanoate (2-ketoisovalerate) to form 3-carboxy-3-hydroxy-4-methylpentanoate (2-isopropylmalate). The chain is 2-isopropylmalate synthase from Geobacillus sp. (strain WCH70).